We begin with the raw amino-acid sequence, 394 residues long: Elongation factor Tu 2 (394 aa).

In terms of domain architecture, tr-type G spans 10 to 204; the sequence is KPHVNVGTIG…ALDSYIPEPE (195 aa). A G1 region spans residues 19 to 26; that stretch reads GHVDHGKT. 19–26 lines the GTP pocket; it reads GHVDHGKT. Threonine 26 is a Mg(2+) binding site. The tract at residues 60–64 is G2; the sequence is GITIN. A G3 region spans residues 81–84; that stretch reads DCPG. GTP is bound by residues 81–85 and 136–139; these read DCPGH and NKCD. A G4 region spans residues 136–139; sequence NKCD. The segment at 174–176 is G5; that stretch reads SAL.

The protein belongs to the TRAFAC class translation factor GTPase superfamily. Classic translation factor GTPase family. EF-Tu/EF-1A subfamily. Monomer.

It localises to the cytoplasm. The enzyme catalyses GTP + H2O = GDP + phosphate + H(+). In terms of biological role, GTP hydrolase that promotes the GTP-dependent binding of aminoacyl-tRNA to the A-site of ribosomes during protein biosynthesis. This is Elongation factor Tu 2 from Shewanella loihica (strain ATCC BAA-1088 / PV-4).